Here is a 141-residue protein sequence, read N- to C-terminus: Transcription antitermination protein NusB (141 aa).

Belongs to the NusB family.

Functionally, involved in transcription antitermination. Required for transcription of ribosomal RNA (rRNA) genes. Binds specifically to the boxA antiterminator sequence of the ribosomal RNA (rrn) operons. This is Transcription antitermination protein NusB from Fervidobacterium nodosum (strain ATCC 35602 / DSM 5306 / Rt17-B1).